The primary structure comprises 408 residues: MNFKKTLLSIAIASASLTPAFSYSAPLLLDNTVHQTSQIAGANAWLEISLGQFKSNIEQFKSHIAPQTKICAVMKADAYGNGIRGLMPTILEQQIPCVAIASNAEAKLVRESGFEGELIRVRSASTSEIEQALSLDIEELIGSEQQARELASLAEKYSKTIKVHLALNDGGMGRNGIDMSTERGPKEAVAIATHPSVAVVGIMTHFPNYNAEDVRTKLKSFNQHAQWLMESAGLKREEITLHVANSYTALNVPEAQLDMVRPGGVLYGDLPTNPEYPSIVAFKTRVASLHSLPAGSTVGYDSTFTTANDAVMANLTVGYSDGYPRKMGNKAQVLINGQRANVVGVASMNTTMVDVSNIKGVLPGDEVTLFGAQKNQHISVGEMEENAEVIFPELYTIWGTSNPRFYVK.

Positions methionine 1–serine 24 are cleaved as a signal peptide. An intrachain disulfide couples cysteine 71 to cysteine 97. The active-site Proton acceptor is the lysine 75. Lysine 75 is subject to N6-(pyridoxal phosphate)lysine. Arginine 174 serves as a coordination point for substrate. The Proton acceptor role is filled by tyrosine 300. Residue methionine 348 coordinates substrate.

The protein belongs to the alanine racemase family. Bsr subfamily. Pyridoxal 5'-phosphate is required as a cofactor.

Its subcellular location is the periplasm. The enzyme catalyses an L-alpha-amino acid = a D-alpha-amino acid. It carries out the reaction L-lysine = D-lysine. The catalysed reaction is L-arginine = D-arginine. Functionally, amino-acid racemase able to utilize a broad range of substrates. This chain is Broad specificity amino-acid racemase (alr), found in Vibrio vulnificus (strain CMCP6).